A 222-amino-acid polypeptide reads, in one-letter code: Small ribosomal subunit protein eS8z (222 aa).

2 disordered regions span residues 1–37 (MGIS…ANTK) and 125–147 (KKKS…VAAP). The span at 8–26 (IHKRRATGGKQKQWRKKRK) shows a compositional bias: basic residues.

This sequence belongs to the eukaryotic ribosomal protein eS8 family.

This is Small ribosomal subunit protein eS8z (RPS8A) from Arabidopsis thaliana (Mouse-ear cress).